We begin with the raw amino-acid sequence, 301 residues long: Glycine--tRNA ligase alpha subunit (301 aa).

Belongs to the class-II aminoacyl-tRNA synthetase family. As to quaternary structure, tetramer of two alpha and two beta subunits.

It localises to the cytoplasm. It carries out the reaction tRNA(Gly) + glycine + ATP = glycyl-tRNA(Gly) + AMP + diphosphate. The sequence is that of Glycine--tRNA ligase alpha subunit from Polaromonas sp. (strain JS666 / ATCC BAA-500).